We begin with the raw amino-acid sequence, 137 residues long: Cellular retinoic acid-binding protein 1 (137 aa).

The short motif at 21-31 is the Nuclear localization signal element; sequence KALGVNAMLRK. 132-134 serves as a coordination point for all-trans-retinoate; the sequence is RIY.

The protein belongs to the calycin superfamily. Fatty-acid binding protein (FABP) family.

The protein localises to the cytoplasm. Functionally, cytosolic CRABPs may regulate the access of retinoic acid to the nuclear retinoic acid receptors. This Hippocampus comes (Tiger tail seahorse) protein is Cellular retinoic acid-binding protein 1 (crabp1).